A 339-amino-acid polypeptide reads, in one-letter code: MTGSGGYGAGAVPAPHLPVLLAEVLEALEPARGKLILDGTFGAGGYTRALLEAGADVIAIDQDPDAIAGGKPLAQEFAPRLRLERGRFSEMEEIAGEMLDGIVLDVGVSSMQLDQAERGFSFRREGPLDMRMGQEGTSAADVVNKFKAGDLARIFGLLGEERHAGRIARAIEKGRAEKPFRTTGDLAELVERVIGHRPTDKIHPATRVFQGLRIFVNDELGELARALFAAERLLKPGGILAVVTFHSLEDRIVKRFLQARSGPQAQSRHLPEKAAAQPVFEKPMKPVSPGEAETAENPRARSAHLRAARRTAHPAGVQDFKLFGVPALFVTEQLGEKAR.

Residues 44-46 (GGY), aspartate 61, phenylalanine 88, aspartate 105, and glutamine 112 each bind S-adenosyl-L-methionine. A disordered region spans residues 263–312 (PQAQSRHLPEKAAAQPVFEKPMKPVSPGEAETAENPRARSAHLRAARRTA). Positions 301–312 (RSAHLRAARRTA) are enriched in basic residues.

The protein belongs to the methyltransferase superfamily. RsmH family.

Its subcellular location is the cytoplasm. The catalysed reaction is cytidine(1402) in 16S rRNA + S-adenosyl-L-methionine = N(4)-methylcytidine(1402) in 16S rRNA + S-adenosyl-L-homocysteine + H(+). In terms of biological role, specifically methylates the N4 position of cytidine in position 1402 (C1402) of 16S rRNA. The sequence is that of Ribosomal RNA small subunit methyltransferase H from Chelativorans sp. (strain BNC1).